The sequence spans 469 residues: NADH-quinone oxidoreductase subunit N (469 aa).

14 helical membrane-spanning segments follow: residues 6–26, 37–57, 61–81, 96–116, 121–141, 156–176, 197–217, 234–254, 263–283, 291–311, 315–335, 362–382, 397–419, and 441–461; these read IWIIMPLAILAGASLLILLLG, VGVAACVGAALWALQLQPAAL, LGVAFTPFARFFTVLFSLTAA, ISGEEYPATVIFAAFGMAVVS, LLILFLGLEALTFAFYILVAI, LLLGAISAACIAFGIALLYAA, PIALAGWGLLLIGIAFKISLV, VVAFLSTASKGAAIAFLLLLL, LHTPLWWLSLLSMLVGNLAAL, MLAYSSIAQMGYLVLALLTGS, FAAVILYVVVYTAMNLAAFGA, AGILALALFALAGIPPTAGFI, IPLAIVGILAAAVSAYYYLRVVV, and IALSAAALVILAVGIYPSPLL.

It belongs to the complex I subunit 2 family. NDH-1 is composed of 14 different subunits. Subunits NuoA, H, J, K, L, M, N constitute the membrane sector of the complex.

The protein localises to the cell inner membrane. It catalyses the reaction a quinone + NADH + 5 H(+)(in) = a quinol + NAD(+) + 4 H(+)(out). NDH-1 shuttles electrons from NADH, via FMN and iron-sulfur (Fe-S) centers, to quinones in the respiratory chain. The immediate electron acceptor for the enzyme in this species is believed to be ubiquinone. Couples the redox reaction to proton translocation (for every two electrons transferred, four hydrogen ions are translocated across the cytoplasmic membrane), and thus conserves the redox energy in a proton gradient. The polypeptide is NADH-quinone oxidoreductase subunit N (Geotalea uraniireducens (strain Rf4) (Geobacter uraniireducens)).